Reading from the N-terminus, the 645-residue chain is DNA ligase (645 aa).

Residues 30 to 34 (DAEFD) and 72 to 73 (SQ) each bind NAD(+). Lys99 (N6-AMP-lysine intermediate) is an active-site residue. NAD(+)-binding residues include Arg120, Glu163, Lys275, and Lys296. Positions 387, 390, 403, and 408 each coordinate Zn(2+). The 82-residue stretch at 564-645 (EEGAVLKGLS…EAFLNLIGKV (82 aa)) folds into the BRCT domain.

The protein belongs to the NAD-dependent DNA ligase family. LigA subfamily. The cofactor is Mg(2+). Mn(2+) is required as a cofactor.

The enzyme catalyses NAD(+) + (deoxyribonucleotide)n-3'-hydroxyl + 5'-phospho-(deoxyribonucleotide)m = (deoxyribonucleotide)n+m + AMP + beta-nicotinamide D-nucleotide.. DNA ligase that catalyzes the formation of phosphodiester linkages between 5'-phosphoryl and 3'-hydroxyl groups in double-stranded DNA using NAD as a coenzyme and as the energy source for the reaction. It is essential for DNA replication and repair of damaged DNA. This Treponema denticola (strain ATCC 35405 / DSM 14222 / CIP 103919 / JCM 8153 / KCTC 15104) protein is DNA ligase.